A 92-amino-acid polypeptide reads, in one-letter code: Actobindin-A (92 aa).

Disordered stretches follow at residues Met-1–Asp-33 and Leu-54–Ser-92. 2 WH2 domains span residues Ala-3–Thr-20 and Asp-40–Ala-57. Basic and acidic residues-rich tracts occupy residues Lys-13–Asp-33 and Leu-54–Ala-64. A compositionally biased stretch (polar residues) spans Asn-68–Ser-79.

In terms of assembly, monomer.

Functionally, is able to bind two actin monomers at high concentrations of G-actin. Inhibits actin polymerization by sequestering G-actin and stabilizing actin dimers. The chain is Actobindin-A (abnA) from Dictyostelium discoideum (Social amoeba).